Reading from the N-terminus, the 132-residue chain is uncharacterized protein (132 aa).

The signal sequence occupies residues 1–24 (MVTIGSSSLVLFLFFVVFVQITYT). The next 2 membrane-spanning stretches (helical) occupy residues 75-95 (YVNV…ILGI) and 112-132 (ESAI…VYIH).

The protein localises to the membrane. This is an uncharacterized protein from Saccharomyces cerevisiae (strain ATCC 204508 / S288c) (Baker's yeast).